The chain runs to 53 residues: UPF0391 membrane protein BP1737 (53 aa).

Helical transmembrane passes span 5-25 (AVVF…GIAA) and 30-50 (IAKI…LGGV).

This sequence belongs to the UPF0391 family.

Its subcellular location is the cell membrane. The sequence is that of UPF0391 membrane protein BP1737 from Bordetella pertussis (strain Tohama I / ATCC BAA-589 / NCTC 13251).